Reading from the N-terminus, the 701-residue chain is MGHSDSSKTFRILMAGNPNCGKSTLFNQLTGLRQKTGNYHGVTVEKAEGIFHHLDHSVKILDLPGAFSLGGSSEDKQITSRVLIGHEAGDRILFVMDASLAERSLQFLLQILELNVPVLVAVTMKDVLEKKRVQLRLDLLSNEFGILFQYVNPKNGEGIKELKDRIVSPKAFCLPIRSFPWDSERENFLNDLLNSLSTEHSNSLKFVLTNSLKELSGEILQKGLPGLSLFSETPSKLIREKFERFGKRFTYLEELTQKSIYIKKILSNAIVGDPIPNERVLSKADKILLHPFWGLVSFLGIMALVFQALFTWSEMPMDWIESCVRNVGTFVGDFLEEGPLRSLIQEGIIGGVGAVLVFIPQISLLFLFIGILEETGYIARASFVMDRFMGKFGLSGKSFIPLLSSAACAVPAIMGTRTIENKSDRLTTILVSPLITCSARYPVYVLVIGAIFPSKNILGIFNVQALTMFGLFLLGMIASMFAALVFKKTFFKSDSSYFLIELPAYNTPSIKSLALTVFKKLKAFLSTAGQIILFISILLWFLANYPRIDSSLYPNLTDAELKKIQIRESYAGHSGKFMEPVLKPIGFDWKMGIGIITSFAAREIMVSTLSIIYGVGGEESTDDLKEALLKDTDENGKPVWGLSNSVSLLLFFAFACQCMSTLAVVKKETNSIFWPLFLFTYMTILAYSTSFIVFQVWQLFS.

One can recognise a FeoB-type G domain in the interval 9 to 172 (TFRILMAGNP…KDRIVSPKAF (164 aa)). GTP-binding positions include 16 to 23 (GNPNCGKS), 41 to 46 (GVTVEK), and 62 to 65 (DLPG). 8 helical membrane passes run 292-312 (FWGL…LFTW), 352-372 (VGAV…IGIL), 394-414 (LSGK…PAIM), 429-451 (ILVS…IGAI), 466-486 (LTMF…ALVF), 523-543 (AFLS…WFLA), 645-665 (SVSL…LAVV), and 672-692 (IFWP…TSFI).

The protein belongs to the TRAFAC class TrmE-Era-EngA-EngB-Septin-like GTPase superfamily. FeoB GTPase (TC 9.A.8) family.

Its subcellular location is the cell inner membrane. Probable transporter of a GTP-driven Fe(2+) uptake system. The chain is Fe(2+) transporter FeoB (feoB) from Leptospira interrogans serogroup Icterohaemorrhagiae serovar Lai (strain 56601).